The primary structure comprises 267 residues: Phosphatidylserine decarboxylase proenzyme (267 aa).

Catalysis depends on charge relay system; for autoendoproteolytic cleavage activity residues aspartate 78, histidine 132, and serine 236. The active-site Schiff-base intermediate with substrate; via pyruvic acid; for decarboxylase activity is the serine 236. The residue at position 236 (serine 236) is a Pyruvic acid (Ser); by autocatalysis.

The protein belongs to the phosphatidylserine decarboxylase family. PSD-B subfamily. Prokaryotic type I sub-subfamily. Heterodimer of a large membrane-associated beta subunit and a small pyruvoyl-containing alpha subunit. Pyruvate is required as a cofactor. In terms of processing, is synthesized initially as an inactive proenzyme. Formation of the active enzyme involves a self-maturation process in which the active site pyruvoyl group is generated from an internal serine residue via an autocatalytic post-translational modification. Two non-identical subunits are generated from the proenzyme in this reaction, and the pyruvate is formed at the N-terminus of the alpha chain, which is derived from the carboxyl end of the proenzyme. The autoendoproteolytic cleavage occurs by a canonical serine protease mechanism, in which the side chain hydroxyl group of the serine supplies its oxygen atom to form the C-terminus of the beta chain, while the remainder of the serine residue undergoes an oxidative deamination to produce ammonia and the pyruvoyl prosthetic group on the alpha chain. During this reaction, the Ser that is part of the protease active site of the proenzyme becomes the pyruvoyl prosthetic group, which constitutes an essential element of the active site of the mature decarboxylase.

The protein localises to the cell membrane. The enzyme catalyses a 1,2-diacyl-sn-glycero-3-phospho-L-serine + H(+) = a 1,2-diacyl-sn-glycero-3-phosphoethanolamine + CO2. It participates in phospholipid metabolism; phosphatidylethanolamine biosynthesis; phosphatidylethanolamine from CDP-diacylglycerol: step 2/2. In terms of biological role, catalyzes the formation of phosphatidylethanolamine (PtdEtn) from phosphatidylserine (PtdSer). This is Phosphatidylserine decarboxylase proenzyme from Helicobacter pylori (strain Shi470).